The following is a 141-amino-acid chain: Large ribosomal subunit protein uL11 (141 aa).

Belongs to the universal ribosomal protein uL11 family. Part of the ribosomal stalk of the 50S ribosomal subunit. Interacts with L10 and the large rRNA to form the base of the stalk. L10 forms an elongated spine to which L12 dimers bind in a sequential fashion forming a multimeric L10(L12)X complex. One or more lysine residues are methylated.

In terms of biological role, forms part of the ribosomal stalk which helps the ribosome interact with GTP-bound translation factors. This is Large ribosomal subunit protein uL11 from Thermomicrobium roseum (strain ATCC 27502 / DSM 5159 / P-2).